Here is a 477-residue protein sequence, read N- to C-terminus: Glycogen synthase (477 aa).

Lysine 15 lines the ADP-alpha-D-glucose pocket.

This sequence belongs to the glycosyltransferase 1 family. Bacterial/plant glycogen synthase subfamily.

It carries out the reaction [(1-&gt;4)-alpha-D-glucosyl](n) + ADP-alpha-D-glucose = [(1-&gt;4)-alpha-D-glucosyl](n+1) + ADP + H(+). It participates in glycan biosynthesis; glycogen biosynthesis. In terms of biological role, synthesizes alpha-1,4-glucan chains using ADP-glucose. This chain is Glycogen synthase, found in Streptococcus pneumoniae (strain 70585).